The primary structure comprises 174 residues: NAD(P)H-quinone oxidoreductase subunit J, chloroplastic (174 aa).

Belongs to the complex I 30 kDa subunit family. In terms of assembly, NDH is composed of at least 16 different subunits, 5 of which are encoded in the nucleus.

The protein resides in the plastid. The protein localises to the chloroplast thylakoid membrane. The enzyme catalyses a plastoquinone + NADH + (n+1) H(+)(in) = a plastoquinol + NAD(+) + n H(+)(out). It carries out the reaction a plastoquinone + NADPH + (n+1) H(+)(in) = a plastoquinol + NADP(+) + n H(+)(out). NDH shuttles electrons from NAD(P)H:plastoquinone, via FMN and iron-sulfur (Fe-S) centers, to quinones in the photosynthetic chain and possibly in a chloroplast respiratory chain. The immediate electron acceptor for the enzyme in this species is believed to be plastoquinone. Couples the redox reaction to proton translocation, and thus conserves the redox energy in a proton gradient. The protein is NAD(P)H-quinone oxidoreductase subunit J, chloroplastic of Mesostigma viride (Green alga).